Here is a 245-residue protein sequence, read N- to C-terminus: MAASEHRCVGCGFRVKSLFIQYSPGNIRLMKCGNCKEVADEYIECERMIIFIDLILHRPKVYRHVLYNAINPATVNIQHLLWKLVFAYLLLDCYRSLLLRKSDEESSFSDSPVLLSIKVLIGVLSANAAFIISFAIATKGLLNEVSRRREIMLGIFISSYFKIFLLAMLVWEFPMSVIFFVDILLLTSNSMALKVMTESTMTRCIAVCLIAHLIRFLVGQIFEPTIFLIQIGSLLQYMSYFFRIV.

The next 5 helical transmembrane spans lie at 70–90 (INPA…AYLL), 117–137 (IKVL…FAIA), 163–183 (IFLL…FVDI), 200–220 (TMTR…LVGQ), and 224–244 (PTIF…FFRI).

It belongs to the ARV1 family. In terms of tissue distribution, restricted to tissues in which cells are actively dividing or expanding. Mostly expressed in roots and flowers, and, to a lower extent, in stems and leaves.

It is found in the endoplasmic reticulum membrane. Functionally, mediator of sterol homeostasis involved in sterol uptake, trafficking and distribution into membranes. Also regulates the sphingolipid metabolism. This Arabidopsis thaliana (Mouse-ear cress) protein is Protein ARV 1.